The primary structure comprises 312 residues: 4-diphosphocytidyl-2-C-methyl-D-erythritol kinase (312 aa).

K18 is an active-site residue. Residue 104-114 (PIAGGMGGGSA) participates in ATP binding. D146 is an active-site residue.

It belongs to the GHMP kinase family. IspE subfamily.

The enzyme catalyses 4-CDP-2-C-methyl-D-erythritol + ATP = 4-CDP-2-C-methyl-D-erythritol 2-phosphate + ADP + H(+). The protein operates within isoprenoid biosynthesis; isopentenyl diphosphate biosynthesis via DXP pathway; isopentenyl diphosphate from 1-deoxy-D-xylulose 5-phosphate: step 3/6. Its function is as follows. Catalyzes the phosphorylation of the position 2 hydroxy group of 4-diphosphocytidyl-2C-methyl-D-erythritol. The protein is 4-diphosphocytidyl-2-C-methyl-D-erythritol kinase of Clavibacter michiganensis subsp. michiganensis (strain NCPPB 382).